The sequence spans 415 residues: Gamma-glutamyl phosphate reductase (415 aa).

This sequence belongs to the gamma-glutamyl phosphate reductase family.

It localises to the cytoplasm. The enzyme catalyses L-glutamate 5-semialdehyde + phosphate + NADP(+) = L-glutamyl 5-phosphate + NADPH + H(+). It functions in the pathway amino-acid biosynthesis; L-proline biosynthesis; L-glutamate 5-semialdehyde from L-glutamate: step 2/2. Functionally, catalyzes the NADPH-dependent reduction of L-glutamate 5-phosphate into L-glutamate 5-semialdehyde and phosphate. The product spontaneously undergoes cyclization to form 1-pyrroline-5-carboxylate. This chain is Gamma-glutamyl phosphate reductase, found in Bacillus cereus (strain B4264).